Consider the following 262-residue polypeptide: Ribosomal RNA small subunit methyltransferase G (262 aa).

Residues Gly-72, Leu-77, and Arg-142 each coordinate S-adenosyl-L-methionine. Residues 212–262 (RSSQLSRAEGRKGRGDGERHDGRQVRRTARDSRRSREVDRDQPTRGQSRST) form a disordered region. The span at 219-254 (AEGRKGRGDGERHDGRQVRRTARDSRRSREVDRDQP) shows a compositional bias: basic and acidic residues.

It belongs to the methyltransferase superfamily. RNA methyltransferase RsmG family.

The protein localises to the cytoplasm. Its function is as follows. Specifically methylates the N7 position of guanine in position 518 of 16S rRNA. In Frankia alni (strain DSM 45986 / CECT 9034 / ACN14a), this protein is Ribosomal RNA small subunit methyltransferase G.